The sequence spans 261 residues: Oxidoreductase ptaF (261 aa).

Belongs to the avfA family.

It functions in the pathway secondary metabolite biosynthesis. In terms of biological role, oxidoreductase; part of the gene cluster that mediates the biosynthesis of pestheic acid, a diphenyl ether which is a biosynthetic precursor of the unique chloropupukeananes. The biosynthesis initiates from condensation of acetate and malonate units catalyzed by the non-reducing PKS ptaA. As the ptaA protein is TE/CLC domain-deficient, hydrolysis and Claisen cyclization of the polyketide could be catalyzed by ptaB containing a beta-lactamase domain. The ptaB protein might hydrolyze the thioester bond between the ACP of ptaA and the intermediate to release atrochrysone carboxylic acid, which is spontaneously dehydrated to form endocrocin anthrone. Endocrocin anthrone is then converted to endocrocin, catalyzed by the anthrone oxygenase ptaC. Spontaneous decarboxylation of endocrocin occurs to generate emodin. An O-methyltransferase (ptaH or ptaI) could methylate emodin to form physcion. PtaJ could then catalyze the oxidative cleavage of physcion, and rotation of the intermediate could then afford desmethylisosulochrin. PtaF, a putative NADH-dependent oxidoreductase, might also participate in the oxidative cleavage step. Desmethylisosulochrin is then transformed by another O-methyltransferase (ptaH or ptaI) to form isosulochrin. Chlorination of isosulochrin by ptaM in the cyclohexadienone B ring then produces chloroisosulochrin. PtaE is responsible for the oxidative coupling reactions of both benzophenones isosulouchrin and chloroisosulochrin to RES-1214-1 and pestheic acid respectively, regardless of chlorination. In Pestalotiopsis fici (strain W106-1 / CGMCC3.15140), this protein is Oxidoreductase ptaF.